Here is a 158-residue protein sequence, read N- to C-terminus: Succinate dehydrogenase [ubiquinone] cytochrome b small subunit B, mitochondrial (158 aa).

The transit peptide at 1–29 (MAALVRISSLCHRGVSPLLFRPSSLIRPL) directs the protein to the mitochondrion. The Mitochondrial matrix portion of the chain corresponds to 30 to 62 (AVQQKDHDCSYLISARIHATPSNYAGSGSKAAT). A helical membrane pass occupies residues 63-84 (MHWTGERILSIALLSLAPVAYF). Residues 85–89 (CPSPA) are Mitochondrial intermembrane-facing. The chain crosses the membrane as a helical span at residues 90 to 110 (VDYSLAAALTLHGHWGLGQVV). His-101 serves as a coordination point for heme b. The Mitochondrial matrix portion of the chain corresponds to 111-119 (TDYVHGDAK). Tyr-113 is a binding site for a ubiquinone. A helical membrane pass occupies residues 120 to 141 (IKMANAGLFVLSTVTFAGLCYF). At 142 to 158 (NYHDVGICKAVALLWSK) the chain is on the mitochondrial intermembrane side.

Belongs to the CybS family. In terms of assembly, component of complex II composed of four subunits: the flavoprotein (FP) SDHA, iron-sulfur protein (IP) SDHB, and a cytochrome b560 composed of SDHC and SDHD.

Its subcellular location is the mitochondrion inner membrane. It participates in carbohydrate metabolism; tricarboxylic acid cycle. Functionally, membrane-anchoring subunit of succinate dehydrogenase (SDH) that is involved in complex II of the mitochondrial electron transport chain and is responsible for transferring electrons from succinate to ubiquinone (coenzyme Q). SDH also oxidizes malate to the non-canonical enol form of oxaloacetate, enol-oxaloacetate. Enol-oxaloacetate, which is a potent inhibitor of the succinate dehydrogenase activity, is further isomerized into keto-oxaloacetate. The polypeptide is Succinate dehydrogenase [ubiquinone] cytochrome b small subunit B, mitochondrial (sdhdb) (Danio rerio (Zebrafish)).